Reading from the N-terminus, the 325-residue chain is ADP-L-glycero-D-manno-heptose-6-epimerase (325 aa).

NADP(+) is bound by residues 10 to 11, 31 to 32, Lys-38, and 75 to 79; these read FI, DD, and EGACS. Catalysis depends on Tyr-139, which acts as the Proton acceptor. Lys-143 serves as a coordination point for NADP(+). Residue Asn-167 participates in substrate binding. NADP(+) is bound by residues Val-168 and Lys-176. The active-site Proton acceptor is Lys-176. Substrate contacts are provided by residues Ser-178, His-185, 199–202, Arg-212, and Tyr-285; that span reads FEGS.

It belongs to the NAD(P)-dependent epimerase/dehydratase family. HldD subfamily. In terms of assembly, homopentamer. The cofactor is NADP(+).

It catalyses the reaction ADP-D-glycero-beta-D-manno-heptose = ADP-L-glycero-beta-D-manno-heptose. The protein operates within nucleotide-sugar biosynthesis; ADP-L-glycero-beta-D-manno-heptose biosynthesis; ADP-L-glycero-beta-D-manno-heptose from D-glycero-beta-D-manno-heptose 7-phosphate: step 4/4. Functionally, catalyzes the interconversion between ADP-D-glycero-beta-D-manno-heptose and ADP-L-glycero-beta-D-manno-heptose via an epimerization at carbon 6 of the heptose. In Azoarcus sp. (strain BH72), this protein is ADP-L-glycero-D-manno-heptose-6-epimerase.